The primary structure comprises 146 residues: Large-conductance mechanosensitive channel (146 aa).

3 helical membrane passes run 21 to 41 (VGII…ADLI), 44 to 64 (IIGL…LGDG), and 83 to 103 (GSFI…FLLV).

This sequence belongs to the MscL family. In terms of assembly, homopentamer.

Its subcellular location is the cell inner membrane. In terms of biological role, channel that opens in response to stretch forces in the membrane lipid bilayer. May participate in the regulation of osmotic pressure changes within the cell. This Cereibacter sphaeroides (strain ATCC 17029 / ATH 2.4.9) (Rhodobacter sphaeroides) protein is Large-conductance mechanosensitive channel.